The following is a 338-amino-acid chain: UDP-3-O-acylglucosamine N-acyltransferase (338 aa).

H239 functions as the Proton acceptor in the catalytic mechanism.

Belongs to the transferase hexapeptide repeat family. LpxD subfamily. As to quaternary structure, homotrimer.

The catalysed reaction is a UDP-3-O-[(3R)-3-hydroxyacyl]-alpha-D-glucosamine + a (3R)-hydroxyacyl-[ACP] = a UDP-2-N,3-O-bis[(3R)-3-hydroxyacyl]-alpha-D-glucosamine + holo-[ACP] + H(+). It participates in bacterial outer membrane biogenesis; LPS lipid A biosynthesis. Functionally, catalyzes the N-acylation of UDP-3-O-acylglucosamine using 3-hydroxyacyl-ACP as the acyl donor. Is involved in the biosynthesis of lipid A, a phosphorylated glycolipid that anchors the lipopolysaccharide to the outer membrane of the cell. This Thermosynechococcus vestitus (strain NIES-2133 / IAM M-273 / BP-1) protein is UDP-3-O-acylglucosamine N-acyltransferase.